The chain runs to 52 residues: Troponin C, skeletal muscle (52 aa).

EF-hand domains lie at Lys2–His37 and Val38–Lys52. Ca(2+) contacts are provided by Asp15, Asn17, Asp19, Tyr21, and Glu26.

The protein belongs to the troponin C family.

Its function is as follows. Troponin is the central regulatory protein of striated muscle contraction. Tn consists of three components: Tn-I which is the inhibitor of actomyosin ATPase, Tn-T which contains the binding site for tropomyosin and Tn-C. The binding of calcium to Tn-C abolishes the inhibitory action of Tn on actin filaments. This chain is Troponin C, skeletal muscle, found in Protopterus dolloi (Slender lungfish).